The sequence spans 645 residues: Zinc finger protein 235 (645 aa).

The region spanning 8–86 (VTFRDVAVVF…TSHDVNKLAR (79 aa)) is the KRAB domain. Disordered regions lie at residues 112-144 (GAEQPSQAPEDDGCLENLPSNHSSSSDNQEFLS) and 255-280 (KKSPVHSTHKDTRHSPSVPIQPSVHP). The span at 129 to 144 (LPSNHSSSSDNQEFLS) shows a compositional bias: polar residues. 13 consecutive C2H2-type zinc fingers follow at residues 285–307 (YWCHECGKGFRQSSALQTHQRVH), 313–335 (YRCDSCGKGFSRSSDLNIHRRVH), 341–363 (YKCEVCGKGFTQWAHLQAHERIH), 369–391 (YKCGDCGKRFSCSSNLHTHQRVH), 397–419 (YECNECGKRFSLSGNLDIHQRVH), 425–447 (YKCEECGKGFSSASSFQSHQRVH), 453–475 (FHCSVCGKNFSRSSHFLDHQRIH), 481–503 (YRCEVCGKRFPWSLSLHSHQSVH), 509–531 (YKCGECGKGFSHASSLQAHHSVH), 537–559 (FKCNVCQKQFSKTSNLQAHQRVH), 565–587 (YKCDTCGKAFSQKSSLQVHQRIH), 593–615 (FKCEECGKEFRWSVGLSSHQRVH), and 621–643 (YTCQQCGKGFSQASYFHMHQRVH).

It belongs to the krueppel C2H2-type zinc-finger protein family.

The protein localises to the nucleus. May be involved in transcriptional regulation. In Mus musculus (Mouse), this protein is Zinc finger protein 235 (Znf235).